The primary structure comprises 236 residues: Lipoarabinomannan carrier protein LprG (236 aa).

Positions 1 to 26 are cleaved as a signal peptide; it reads MRTPRRHCRRIAVLAAVSIAATVVAG. Cysteine 27 carries the N-palmitoyl cysteine lipid modification. A lipid anchor (S-diacylglycerol cysteine) is attached at cysteine 27.

It belongs to the LppX/LprAFG lipoprotein family. In terms of processing, modified by Lgt on Cys-27 with an S-linked diacylglyceral, signal peptide is removed by LspA, Cys-27 is further modifed with a fatty acid on its amino group by Lnt yielding a triacylated protein.

It is found in the cell inner membrane. The protein resides in the secreted. The protein localises to the cell wall. Its function is as follows. Helps membrane protein Mb1445c (P55) transport triacylglycerides (TAG) across the inner cell membrane into the periplasm and probably ultimately to the outer membrane. Binds TAG in its hydrophobic cavity and transfers it between lipid bilayers. TAG probably regulates lipid metabolism and growth regulation and plays a structural role in the outer membrane. Binds di- and triacylated phosphatidyl-myo-inositol mannosides (PIMs), and glycolipid lipoglycan modulins lipoarabinomannan (LAM) and lipomannan (LM), facilitating their recognition by TLR2. Required for activity of drug efflux transporter Mb1445c. Required, probably with Mb1445c, for normal surface localization of LAM. Constitutes a host TLR2 agonist (toll-like receptor). The sequence is that of Lipoarabinomannan carrier protein LprG from Mycobacterium bovis (strain ATCC BAA-935 / AF2122/97).